Here is a 695-residue protein sequence, read N- to C-terminus: Glycine--tRNA ligase beta subunit (695 aa).

This sequence belongs to the class-II aminoacyl-tRNA synthetase family. In terms of assembly, tetramer of two alpha and two beta subunits.

The protein localises to the cytoplasm. It carries out the reaction tRNA(Gly) + glycine + ATP = glycyl-tRNA(Gly) + AMP + diphosphate. The protein is Glycine--tRNA ligase beta subunit of Desulforamulus reducens (strain ATCC BAA-1160 / DSM 100696 / MI-1) (Desulfotomaculum reducens).